The primary structure comprises 82 residues: UPF0298 protein SPCG_0698 (82 aa).

It belongs to the UPF0298 family.

The protein resides in the cytoplasm. The chain is UPF0298 protein SPCG_0698 from Streptococcus pneumoniae (strain CGSP14).